A 228-amino-acid polypeptide reads, in one-letter code: Acyl-protein thioesterase 1 (228 aa).

Active-site charge relay system residues include S119, D174, and H208.

It belongs to the AB hydrolase superfamily. AB hydrolase 2 family.

The protein localises to the cytoplasm. It is found in the nucleus. It carries out the reaction S-hexadecanoyl-L-cysteinyl-[protein] + H2O = L-cysteinyl-[protein] + hexadecanoate + H(+). Hydrolyzes fatty acids from S-acylated cysteine residues in proteins with a strong preference for palmitoylated G-alpha proteins over other acyl substrates. Mediates the deacylation of G-alpha proteins such as GPA1 in vivo, but has weak or no activity toward palmitoylated Ras proteins. Has weak lysophospholipase activity in vitro; however such activity may not exist in vivo. The sequence is that of Acyl-protein thioesterase 1 from Kluyveromyces lactis (strain ATCC 8585 / CBS 2359 / DSM 70799 / NBRC 1267 / NRRL Y-1140 / WM37) (Yeast).